Here is a 126-residue protein sequence, read N- to C-terminus: Fluoride-specific ion channel FluC (126 aa).

The next 4 membrane-spanning stretches (helical) occupy residues 3 to 23, 37 to 57, 68 to 88, and 101 to 121; these read PYLL…RFLI, VGTL…ALYF, LVIT…LETV, and TNIT…MMLF. 2 residues coordinate Na(+): Gly75 and Thr78.

Belongs to the fluoride channel Fluc/FEX (TC 1.A.43) family.

The protein resides in the cell inner membrane. The catalysed reaction is fluoride(in) = fluoride(out). Na(+) is not transported, but it plays an essential structural role and its presence is essential for fluoride channel function. Functionally, fluoride-specific ion channel. Important for reducing fluoride concentration in the cell, thus reducing its toxicity. This is Fluoride-specific ion channel FluC from Sulfurovum sp. (strain NBC37-1).